Reading from the N-terminus, the 443-residue chain is Chromosomal replication initiator protein DnaA (443 aa).

The interval M1–E80 is domain I, interacts with DnaA modulators. Residues E80–F104 form a domain II region. Residues Q105–K321 form a domain III, AAA+ region region. 4 residues coordinate ATP: G148, G150, K151, and T152. A domain IV, binds dsDNA region spans residues K322–Q443.

This sequence belongs to the DnaA family. Oligomerizes as a right-handed, spiral filament on DNA at oriC.

It localises to the cytoplasm. In terms of biological role, plays an essential role in the initiation and regulation of chromosomal replication. ATP-DnaA binds to the origin of replication (oriC) to initiate formation of the DNA replication initiation complex once per cell cycle. Binds the DnaA box (a 9 base pair repeat at the origin) and separates the double-stranded (ds)DNA. Forms a right-handed helical filament on oriC DNA; dsDNA binds to the exterior of the filament while single-stranded (ss)DNA is stabiized in the filament's interior. The ATP-DnaA-oriC complex binds and stabilizes one strand of the AT-rich DNA unwinding element (DUE), permitting loading of DNA polymerase. After initiation quickly degrades to an ADP-DnaA complex that is not apt for DNA replication. Binds acidic phospholipids. This chain is Chromosomal replication initiator protein DnaA, found in Leptospira interrogans serogroup Icterohaemorrhagiae serovar copenhageni (strain Fiocruz L1-130).